Here is a 972-residue protein sequence, read N- to C-terminus: DNA cross-link repair 1A protein (972 aa).

The tract at residues 14–80 (YKSIRKRKPQ…SEDLDPCKDD (67 aa)) is disordered. A compositionally biased stretch (polar residues) spans 23-37 (QSNPDSTSVSMQTVT). A compositionally biased stretch (basic residues) spans 39–54 (GKCRPKRKGSGNRKKS). The span at 64–80 (SEQRLRPSEDLDPCKDD) shows a compositional bias: basic and acidic residues. A UBZ4-type zinc finger spans residues 105 to 135 (DGYCPSCQMPFSLLVVQTPRWHVAECLDTPG). Positions 108, 111, 126, and 130 each coordinate Zn(2+). Disordered regions lie at residues 191-219 (KSSC…NNEC) and 552-623 (GEAC…TTDE). Residues 210–219 (NLKNVPNNEC) show a composition bias toward polar residues.

This sequence belongs to the DNA repair metallo-beta-lactamase (DRMBL) family. Binds PIAS1.

The protein localises to the nucleus. It carries out the reaction a beta-lactam + H2O = a substituted beta-amino acid. In terms of biological role, may be required for DNA interstrand cross-link repair. The chain is DNA cross-link repair 1A protein (DCLRE1A) from Gallus gallus (Chicken).